A 645-amino-acid chain; its full sequence is MTSRPITPLLDTIRGPSDTRGLSVAQLEQLAREVRAEMIDAVSVTGGHLGSGLGVVELTVALHHVFDTPDDRIIWDVGHQCYPHKILTGRRDRIRTLRQGGGLSGFTLREESPYDPFGAGHSSTSISAGLGMAIGSALAGDARDVVAVIGDGSMSAGMAYEAMNNAGAAKSRLIVILNDNDMSIAPPVGAMSAYLSRLLSSKSWLSIRTLAKEIVARLPDALERTAKRAEEYARGMVTGGGTLFEELGFYYVGPIDGHRMDHLVPVLRNVREAGRDGPVLIHVVTQKGKGYAPAENAPDKYHGVSRFNVVTGVQEKAKPQAPSYTAVFGKQLVAAAAKDHRIVGVTAAMPGGTGLDKLATAYPQRCFDVGIAEQHAVTFAAGLACEGLKPFVALYSSFLQRGYDQVVHDVVLQKLPVRFAIDRAGFVGADGATHGGVFDMAFLGCLPNLVVMCAADEAELARMVVTAAGHDSGPIALRYPRGEGVGVEIPEDPQPLAIGKGRIVREGKGVALLSIGTRLQSCLEACEILAARGLTPTVADARFLKPFDEELVADLAARHEVLIVVEEGAIGGFGAHVATWLTNQGLLDGGLKLRALHIPDRFFEHDAPEVQCAKAGIDAQAITTAVLDALKLETSATIDAGALKA.

Residues H79 and 120–122 contribute to the thiamine diphosphate site; that span reads GHS. D151 lines the Mg(2+) pocket. Thiamine diphosphate-binding positions include 152–153, N180, Y291, and E373; that span reads GS. N180 is a Mg(2+) binding site.

This sequence belongs to the transketolase family. DXPS subfamily. In terms of assembly, homodimer. Mg(2+) serves as cofactor. Requires thiamine diphosphate as cofactor.

The enzyme catalyses D-glyceraldehyde 3-phosphate + pyruvate + H(+) = 1-deoxy-D-xylulose 5-phosphate + CO2. Its pathway is metabolic intermediate biosynthesis; 1-deoxy-D-xylulose 5-phosphate biosynthesis; 1-deoxy-D-xylulose 5-phosphate from D-glyceraldehyde 3-phosphate and pyruvate: step 1/1. In terms of biological role, catalyzes the acyloin condensation reaction between C atoms 2 and 3 of pyruvate and glyceraldehyde 3-phosphate to yield 1-deoxy-D-xylulose-5-phosphate (DXP). The protein is 1-deoxy-D-xylulose-5-phosphate synthase 1 of Rhodospirillum rubrum (strain ATCC 11170 / ATH 1.1.1 / DSM 467 / LMG 4362 / NCIMB 8255 / S1).